Consider the following 80-residue polypeptide: Serine rich endogenous peptide 18 (80 aa).

Residues 1-25 form the signal peptide; that stretch reads MYNVVVCLLTLSFLLLTGLSNTAEA. The SCOOP motif signature appears at 45–59; that stretch reads KAEVGGSCSPHAHGR. The interval 50-80 is disordered; that stretch reads GSCSPHAHGRGPPNRPGSSNIPGSPKRCTKP. The SxS motif essential for MIK2 binding motif lies at 51–53; sequence SCS.

The protein belongs to the serine rich endogenous peptide (SCOOP) phytocytokine family. In terms of assembly, interacts with MIK2 (via extracellular leucine-rich repeat domain); this interaction triggers the formation of complex between MIK2 and the BAK1/SERK3 and SERK4 coreceptors, and subsequent BAK1 activation by phosphorylation.

The protein resides in the cell membrane. It is found in the secreted. Its subcellular location is the extracellular space. It localises to the apoplast. In terms of biological role, brassicaceae-specific phytocytokine (plant endogenous peptide released into the apoplast) perceived by MIK2 in a BAK1/SERK3 and SERK4 coreceptors-dependent manner, that modulates various physiological and antimicrobial processes including growth prevention and reactive oxygen species (ROS) response regulation. The polypeptide is Serine rich endogenous peptide 18 (Arabidopsis thaliana (Mouse-ear cress)).